A 352-amino-acid polypeptide reads, in one-letter code: Enhancer of mRNA-decapping protein 1 (352 aa).

Disordered regions lie at residues 1–258 (MMAH…PRNH) and 277–352 (QYPQ…SSKS). Residues 71–80 (HTSSNTSNNK) show a composition bias toward low complexity. Composition is skewed to polar residues over residues 93-104 (NFGNESSHQNGG) and 205-225 (TEPN…SVNV). Over residues 289–309 (GGVYPMVAPQYQQQPQQHPQQ) the composition is skewed to low complexity.

Belongs to the EDC family.

Its subcellular location is the cytoplasm. In terms of biological role, mRNA-binding protein which stimulates mRNA decapping. This chain is Enhancer of mRNA-decapping protein 1 (EDC1), found in Debaryomyces hansenii (strain ATCC 36239 / CBS 767 / BCRC 21394 / JCM 1990 / NBRC 0083 / IGC 2968) (Yeast).